A 92-amino-acid chain; its full sequence is Alpha-conotoxin FrXXA 2 (92 aa).

Residues Met-1–Gly-24 form the signal peptide. Positions Gln-25–Arg-45 are excised as a propeptide. 4 disulfides stabilise this stretch: Cys-63–Cys-72, Cys-68–Cys-80, Cys-73–Cys-90, and Cys-78–Cys-92.

Belongs to the conotoxin D superfamily. Homodimer; disulfide-linked. The homodimer contains 10 disulfide bonds. As to expression, expressed by the venom duct.

The protein resides in the secreted. Its function is as follows. Alpha-conotoxins act on postsynaptic membranes, they bind to the nicotinic acetylcholine receptors (nAChR) and thus inhibit them. Through its two C-terminal domains, this homodimeric protein would bind to two nAChR allosteric sites, located outside the nAChR C-loop of the principal binding face and at the adjacent binding interface in a clockwise direction. Component 4b which seems to correspond to this toxin blocks both neuronal and muscular subtypes: human alpha-7/CHRNA7 (IC(50)=125 nM), human alpha-3-beta-2 (CHRNA3-CHRNB2) (IC(50)=282 nM), human alpha-4-beta-2 (CHRNA4-CHRNB2) (IC(50)=697 nM), mouse adult muscular subtype alpha-1-beta-1-delta-epsilon (CHRNA1-CHRNB1-CHRND-CHRNE) (IC(50)=351 nM), and mouse fetal muscular subtype alpha-1-beta-1-gamma-delta (CHRNA1-CHRNB1-CHRNG-CHRND) (IC(50)=447 nM). It shows different dissociation rates towards the different subtypes, with a very slow rate towards alpha-7 subtype (almost irreversible), followed by the adult muscular subtype, the fetal muscular subtype, alpha-3-beta-2 and alpha-4-beta-2 (almost entirely reversible within a few minutes of washing). The sequence is that of Alpha-conotoxin FrXXA 2 from Conus fergusoni (Ferguson's cone).